A 919-amino-acid chain; its full sequence is Probable glucan 1,3-alpha-glucosidase (919 aa).

The first 28 residues, 1–28 (MDPPPRPRPHRVAVLLLLLLASSPAARA), serve as a signal peptide directing secretion. Asp510 functions as the Nucleophile in the catalytic mechanism. Residue Glu513 is part of the active site. Residue Asp586 is the Proton donor of the active site. N-linked (GlcNAc...) asparagine glycosylation occurs at Asn802.

It belongs to the glycosyl hydrolase 31 family. Heterodimer of a catalytic alpha subunit and a beta subunit.

It localises to the endoplasmic reticulum. The catalysed reaction is N(4)-(alpha-D-Glc-(1-&gt;3)-alpha-D-Man-(1-&gt;2)-alpha-D-Man-(1-&gt;2)-alpha-D-Man-(1-&gt;3)-[alpha-D-Man-(1-&gt;2)-alpha-D-Man-(1-&gt;3)-[alpha-D-Man-(1-&gt;2)-alpha-D-Man-(1-&gt;6)]-alpha-D-Man-(1-&gt;6)]-beta-D-Man-(1-&gt;4)-beta-D-GlcNAc-(1-&gt;4)-beta-D-GlcNAc)-L-asparaginyl-[protein] + H2O = N(4)-(alpha-D-Man-(1-&gt;2)-alpha-D-Man-(1-&gt;2)-alpha-D-Man-(1-&gt;3)-[alpha-D-Man-(1-&gt;2)-alpha-D-Man-(1-&gt;3)-[alpha-D-Man-(1-&gt;2)-alpha-D-Man-(1-&gt;6)]-alpha-D-Man-(1-&gt;6)]-beta-D-Man-(1-&gt;4)-beta-D-GlcNAc-(1-&gt;4)-beta-D-GlcNAc)-L-asparaginyl-[protein] (N-glucan mannose isomer 9A1,2,3B1,2,3) + beta-D-glucose. It carries out the reaction N(4)-(alpha-D-Glc-(1-&gt;3)-alpha-D-Glc-(1-&gt;3)-alpha-D-Man-(1-&gt;2)-alpha-D-Man-(1-&gt;2)-alpha-D-Man-(1-&gt;3)-[alpha-D-Man-(1-&gt;2)-alpha-D-Man-(1-&gt;3)-[alpha-D-Man-(1-&gt;2)-alpha-D-Man-(1-&gt;6)]-alpha-D-Man-(1-&gt;6)]-beta-D-Man-(1-&gt;4)-beta-D-GlcNAc-(1-&gt;4)-beta-D-GlcNAc)-L-asparaginyl-[protein] + H2O = N(4)-(alpha-D-Glc-(1-&gt;3)-alpha-D-Man-(1-&gt;2)-alpha-D-Man-(1-&gt;2)-alpha-D-Man-(1-&gt;3)-[alpha-D-Man-(1-&gt;2)-alpha-D-Man-(1-&gt;3)-[alpha-D-Man-(1-&gt;2)-alpha-D-Man-(1-&gt;6)]-alpha-D-Man-(1-&gt;6)]-beta-D-Man-(1-&gt;4)-beta-D-GlcNAc-(1-&gt;4)-beta-D-GlcNAc)-L-asparaginyl-[protein] + beta-D-glucose. The protein operates within glycan metabolism; N-glycan metabolism. In terms of biological role, cleaves sequentially the 2 innermost alpha-1,3-linked glucose residues from the Glc(2)Man(9)GlcNAc(2) oligosaccharide precursor of immature glycoproteins. May be required for defense response elicited by pathogen-associated molecular patterns (PAMPs). The polypeptide is Probable glucan 1,3-alpha-glucosidase (Oryza sativa subsp. japonica (Rice)).